An 88-amino-acid chain; its full sequence is Small ribosomal subunit protein uS17 (88 aa).

It belongs to the universal ribosomal protein uS17 family. In terms of assembly, part of the 30S ribosomal subunit.

Functionally, one of the primary rRNA binding proteins, it binds specifically to the 5'-end of 16S ribosomal RNA. The chain is Small ribosomal subunit protein uS17 from Teredinibacter turnerae (strain ATCC 39867 / T7901).